The chain runs to 324 residues: Probable metal transport system membrane protein CPn_0346/CP_0414/CPj0346/CpB0353 (324 aa).

Transmembrane regions (helical) follow at residues Met1 to Phe21, Ile39 to Val59, Ala64 to Phe84, Gly94 to Ile114, Ser125 to Thr145, Glu165 to Phe185, Leu201 to Val221, Ala226 to Ile246, Ser252 to Ser272, and Ser286 to Phe306.

This sequence belongs to the ABC-3 integral membrane protein family.

The protein resides in the cell inner membrane. Part of an ATP-driven transport system CPn_0346/CPn_0347/CPn_0348/CPn_0349 for a metal. This is Probable metal transport system membrane protein CPn_0346/CP_0414/CPj0346/CpB0353 from Chlamydia pneumoniae (Chlamydophila pneumoniae).